We begin with the raw amino-acid sequence, 181 residues long: Gastrokine-3 (181 aa).

The N-terminal stretch at 1-20 (MKHLVASSILGVFVLTPSLA) is a signal peptide. A BRICHOS domain is found at 53 to 145 (NNIFSEWDGI…MCRDDPTYFA (93 aa)). Residues Cys-80 and Cys-137 are joined by a disulfide bond.

The protein belongs to the gastrokine family.

The protein resides in the secreted. Its function is as follows. May inhibit gastric epithelial cell proliferation. The sequence is that of Gastrokine-3 (GKN3P) from Homo sapiens (Human).